Reading from the N-terminus, the 234-residue chain is Probable transcriptional regulatory protein TcrX (234 aa).

The Response regulatory domain maps to 10 to 124 (TVLVVDDEPV…EVVLRLRALL (115 aa)). The residue at position 59 (D59) is a 4-aspartylphosphate. Positions 135-232 (GAQLVVGDLV…LRGAGYVLKP (98 aa)) form a DNA-binding region, ompR/PhoB-type.

Post-translationally, phosphorylated by TcrY.

Its subcellular location is the cytoplasm. In terms of biological role, member of the two-component regulatory system TcrY/TcrX. This chain is Probable transcriptional regulatory protein TcrX (tcrX), found in Mycobacterium tuberculosis (strain ATCC 25618 / H37Rv).